The following is a 257-amino-acid chain: MDRIIEKLESGWWIVSHEQKLWLPYGELPHGLAANFDLVGQRALRIGEWQGEPVWLVLQHRRHDMGSVRQVIDQDAGLFQLAGRGVQLAEFYRSHKFCGYCGHPMHPSKTEWAMLCSHCRERYYPQIAPCIIVAIRREDSILLAQHVRHRNGVHTVLAGFVEVGETLEQAVAREVMEESGIKVKNLRYVTSQPWPFPQSLMTAFMAEYDSGEIVIDPKELLEANWYRYDDLPLLPPPGTVARRLIEDTVAMCRAEYD.

Arginine 69 serves as a coordination point for substrate. Residues cysteine 98 and cysteine 101 each contribute to the Zn(2+) site. Glutamate 111 is a binding site for substrate. The Zn(2+) site is built by cysteine 116 and cysteine 119. Tyrosine 124 serves as a coordination point for substrate. The region spanning 125–248 (PQIAPCIIVA…TVARRLIEDT (124 aa)) is the Nudix hydrolase domain. A divalent metal cation-binding residues include alanine 158, glutamate 174, and glutamate 178. A Nudix box motif is present at residues 159-180 (GFVEVGETLEQAVAREVMEESG). Position 192–199 (192–199 (QPWPFPQS)) interacts with substrate. Glutamate 219 provides a ligand contact to a divalent metal cation. Alanine 241 is a substrate binding site.

The protein belongs to the Nudix hydrolase family. NudC subfamily. In terms of assembly, homodimer. Requires Mg(2+) as cofactor. Mn(2+) serves as cofactor. It depends on Zn(2+) as a cofactor.

It catalyses the reaction a 5'-end NAD(+)-phospho-ribonucleoside in mRNA + H2O = a 5'-end phospho-adenosine-phospho-ribonucleoside in mRNA + beta-nicotinamide D-ribonucleotide + 2 H(+). The enzyme catalyses NAD(+) + H2O = beta-nicotinamide D-ribonucleotide + AMP + 2 H(+). The catalysed reaction is NADH + H2O = reduced beta-nicotinamide D-ribonucleotide + AMP + 2 H(+). MRNA decapping enzyme that specifically removes the nicotinamide adenine dinucleotide (NAD) cap from a subset of mRNAs by hydrolyzing the diphosphate linkage to produce nicotinamide mononucleotide (NMN) and 5' monophosphate mRNA. The NAD-cap is present at the 5'-end of some mRNAs and stabilizes RNA against 5'-processing. Has preference for mRNAs with a 5'-end purine. Catalyzes the hydrolysis of a broad range of dinucleotide pyrophosphates. The chain is NAD-capped RNA hydrolase NudC from Salmonella dublin (strain CT_02021853).